The chain runs to 427 residues: UPF0229 protein YeaH (427 aa).

Residues 79–90 (NDHFVQNDRIER) show a composition bias toward basic and acidic residues. Residues 79 to 110 (NDHFVQNDRIERPQGGGGGSGSGQGQASQDGE) form a disordered region. The segment covering 92–102 (QGGGGGSGSGQ) has biased composition (gly residues).

It belongs to the UPF0229 family.

The polypeptide is UPF0229 protein YeaH (Escherichia coli O127:H6 (strain E2348/69 / EPEC)).